A 267-amino-acid chain; its full sequence is Thiazole synthase (267 aa).

Lysine 110 acts as the Schiff-base intermediate with DXP in catalysis. Residues glycine 171, 197 to 198 (AG), and 219 to 220 (NT) each bind 1-deoxy-D-xylulose 5-phosphate.

Belongs to the ThiG family. As to quaternary structure, homotetramer. Forms heterodimers with either ThiH or ThiS.

The protein localises to the cytoplasm. The catalysed reaction is [ThiS sulfur-carrier protein]-C-terminal-Gly-aminoethanethioate + 2-iminoacetate + 1-deoxy-D-xylulose 5-phosphate = [ThiS sulfur-carrier protein]-C-terminal Gly-Gly + 2-[(2R,5Z)-2-carboxy-4-methylthiazol-5(2H)-ylidene]ethyl phosphate + 2 H2O + H(+). Its pathway is cofactor biosynthesis; thiamine diphosphate biosynthesis. In terms of biological role, catalyzes the rearrangement of 1-deoxy-D-xylulose 5-phosphate (DXP) to produce the thiazole phosphate moiety of thiamine. Sulfur is provided by the thiocarboxylate moiety of the carrier protein ThiS. In vitro, sulfur can be provided by H(2)S. The polypeptide is Thiazole synthase (Maricaulis maris (strain MCS10) (Caulobacter maris)).